A 208-amino-acid chain; its full sequence is Peptide deformylase 3 (208 aa).

Fe cation is bound by residues Cys120 and His162. Glu163 is a catalytic residue. Residue His166 participates in Fe cation binding.

It belongs to the polypeptide deformylase family. Requires Fe(2+) as cofactor.

It carries out the reaction N-terminal N-formyl-L-methionyl-[peptide] + H2O = N-terminal L-methionyl-[peptide] + formate. In terms of biological role, removes the formyl group from the N-terminal Met of newly synthesized proteins. Requires at least a dipeptide for an efficient rate of reaction. N-terminal L-methionine is a prerequisite for activity but the enzyme has broad specificity at other positions. In Streptomyces coelicolor (strain ATCC BAA-471 / A3(2) / M145), this protein is Peptide deformylase 3.